Consider the following 891-residue polypeptide: Kinesin-like protein KIN-UB (891 aa).

A disordered region spans residues 1–54 (MSGKVANATPKAAAGKPRLSAAGGGAYRRTSSGPLPSAGGGGGRASSESGVSSR). The segment covering 45–54 (ASSESGVSSR) has biased composition (low complexity). A Kinesin motor domain is found at 54-400 (RVRVAVRLRP…IMFGQRAMKV (347 aa)). Position 139-146 (139-146 (GQTGTGKT)) interacts with ATP. Positions 370–378 (RTSLVVTIG) match the D-BOX motif. The stretch at 502–592 (TSSEVGEVQN…ADETRRSLDR (91 aa)) forms a coiled coil. Over residues 586-595 (TRRSLDRGDG) the composition is skewed to basic and acidic residues. Residues 586 to 626 (TRRSLDRGDGSGKIFPGFDSLMSHSRNSQPREQSNGPKPPI) form a disordered region. Over residues 607 to 621 (MSHSRNSQPREQSNG) the composition is skewed to polar residues. ARM repeat units lie at residues 623 to 662 (KPPI…NLAA), 664 to 704 (EANQ…NLAM), 706 to 746 (ETNQ…NLCG), and 748 to 787 (DKLQ…NFAK).

Belongs to the TRAFAC class myosin-kinesin ATPase superfamily. Kinesin family. Ungrouped subfamily.

It localises to the cytoplasm. The protein localises to the cytoskeleton. The protein is Kinesin-like protein KIN-UB of Oryza sativa subsp. japonica (Rice).